We begin with the raw amino-acid sequence, 454 residues long: MTLNLRKVPAYLPGKVDGALTNLVHAAVDHVVPGLGKAEKAAAVYNIKQVVKKLGTYTEQGVKKIAKKTLGELGYLNYTPSSHLGMAITGRGTKQINMSRSTNAGGFALGGTTAAPVSISRNINRRSKPSIKMMGDAVVISHSEMLGAINSGTPSSNVTAFRCTGYRANPGMSTIFPWLSATAVNYEKYKFRRLSFTLVPLVSTNYSGRIGVGFDYDSSDLVPGNRQEFYALSNHCENMPWQESTVEIKCDNAYRFTGTHVAADNKLIDLGQVVVMSDSVSNGGTISAALPLFDLIVNYTVELIEPQQALFSSQLYSGSTTFTSGIPLGTGADTTTVVGPTVVNSTTVTNCVVTFKLPAGVFEVSYFIAWSTGTAAVVPTVPTTGAGSKLSNTSTGSNSYGVCFINSPVECDLLLTATVLLIIPTLPSSTCVFHAPARRCTTPMCHRLLTSLAG.

It belongs to the icosahedral plant coat protein family. In terms of assembly, homomultimer.

The protein localises to the virion. Capsid protein self-assembles to form an icosahedral capsid with a T=3 symmetry, about 28-34 nm in diameter, and consisting of 180 capsid proteins. The polypeptide is Capsid protein (Oat chlorotic stunt virus (isolate United Kingdom) (OCSV)).